A 385-amino-acid polypeptide reads, in one-letter code: Alanine--glyoxylate aminotransferase 1 (385 aa).

N6-(pyridoxal phosphate)lysine is present on lysine 201. Position 354 (arginine 354) interacts with substrate.

Belongs to the class-V pyridoxal-phosphate-dependent aminotransferase family. Homodimer. It depends on pyridoxal 5'-phosphate as a cofactor.

It carries out the reaction glyoxylate + L-alanine = glycine + pyruvate. It participates in amino-acid biosynthesis; glycine biosynthesis; glycine from glyoxylate: step 1/1. Its function is as follows. Has alanine:glyoxylate aminotransferase activity. This is Alanine--glyoxylate aminotransferase 1 from Saccharomyces cerevisiae (strain ATCC 204508 / S288c) (Baker's yeast).